The following is a 197-amino-acid chain: MKQFIDFIPLLLFFIVYKLDPRPMEVAGHHFEFGGIYSATAMLIISSLVVYGALFLRQRKLEKGQWLTLIACLVFGGLTLTFHSETFLKWKAPVVNWLFALGFAGSHFIGDRVLIKRIMGHALTLPDAIWTRLNLAWIAFFLFCGAANLFVAFTFQDFWVDFKVFGSLGMTVIFLVAQGVYLSRHLHDDPSTSKPKD.

5 helical membrane passes run 36–56 (IYSA…ALFL), 64–84 (GQWL…TFHS), 90–110 (WKAP…HFIG), 135–155 (LAWI…AFTF), and 162–182 (FKVF…GVYL).

Belongs to the YciB family.

Its subcellular location is the cell inner membrane. Its function is as follows. Plays a role in cell envelope biogenesis, maintenance of cell envelope integrity and membrane homeostasis. This is Inner membrane-spanning protein YciB from Pseudomonas putida (strain ATCC 700007 / DSM 6899 / JCM 31910 / BCRC 17059 / LMG 24140 / F1).